The following is a 157-amino-acid chain: Globin (157 aa).

At glycine 1 the chain carries N-acetylglycine. Residues 8–155 enclose the Globin domain; it reads SLSADQKAAI…MANIIDAEQK (148 aa). Histidine 70 and histidine 102 together coordinate heme b.

It belongs to the globin family. Monomer.

This chain is Globin, found in Nerita albicilla (Ox-palate nerite).